The sequence spans 385 residues: Mannitol-1-phosphate 5-dehydrogenase (385 aa).

3–14 (ALHFGAGNIGRG) provides a ligand contact to NAD(+).

It belongs to the mannitol dehydrogenase family.

It catalyses the reaction D-mannitol 1-phosphate + NAD(+) = beta-D-fructose 6-phosphate + NADH + H(+). In Pasteurella multocida (strain Pm70), this protein is Mannitol-1-phosphate 5-dehydrogenase.